A 231-amino-acid polypeptide reads, in one-letter code: MGQKINPIGLRLGINRTWDSRWYAGKNEYGRLLHEDVRIRELLHKELKQAAVARIVIERPHKKCRVTIHSARPGVVIGKKGADIDKLRKRVADITSSDVVINIVEIRKPELDATLVAESIAQQLERRVAFRRAMKRAVQSAMRLGAEGIRINCSGRLGGAEIARMEWYREGRVPLHTLRADVDYGVATAFTTFGTCGVKVWIFKGEILEHDPMAQDKRLAGDDNRPRRDAA.

The 69-residue stretch at 39 to 107 (IRELLHKELK…DVVINIVEIR (69 aa)) folds into the KH type-2 domain.

The protein belongs to the universal ribosomal protein uS3 family. As to quaternary structure, part of the 30S ribosomal subunit. Forms a tight complex with proteins S10 and S14.

Functionally, binds the lower part of the 30S subunit head. Binds mRNA in the 70S ribosome, positioning it for translation. In Nitrobacter hamburgensis (strain DSM 10229 / NCIMB 13809 / X14), this protein is Small ribosomal subunit protein uS3.